The chain runs to 370 residues: MATSPYPLVAPEIAGSPSRPRIVAALSGGVDSSTVAAILHEQGYAVEGVTLWLMRGKGQCCTDGLVDAAAICEQLGIPHHIVDSRELFQANIVDYLVAGYADGITPLPCSQCNKLVKFGPLLTYARETLGISQIATGHYARVRFNSELGRYQLLRAVDRQKDQSYFLYDLSQEHLAHSLFPLGNYTKAQTRQIAARYGLVTANKPESQDLCLIETYGSMRNFLDQHLGQRPGEIVDTQGRVLGSHQGIHHYTVGQRKGLGIASSRPLYVVRIDAAMNRVVVGEREEATQAEAWVRQVNWVSTPAPDEPLAVEVQVRYRTPAVPATLIPESPERVKLQFAEPQFGVTPGQAAVWYHGDLLLGGGILERPSP.

ATP-binding positions include 25–32 (ALSGGVDS) and L51. The Nucleophile role is filled by C112. C112 and C211 are oxidised to a cystine. G137 serves as a coordination point for ATP. The interaction with tRNA stretch occupies residues 161 to 163 (KDQ). The active-site Cysteine persulfide intermediate is C211. The interval 316–317 (RY) is interaction with tRNA.

This sequence belongs to the MnmA/TRMU family.

It is found in the cytoplasm. It catalyses the reaction S-sulfanyl-L-cysteinyl-[protein] + uridine(34) in tRNA + AH2 + ATP = 2-thiouridine(34) in tRNA + L-cysteinyl-[protein] + A + AMP + diphosphate + H(+). Catalyzes the 2-thiolation of uridine at the wobble position (U34) of tRNA, leading to the formation of s(2)U34. In Synechococcus sp. (strain JA-3-3Ab) (Cyanobacteria bacterium Yellowstone A-Prime), this protein is tRNA-specific 2-thiouridylase MnmA.